Consider the following 255-residue polypeptide: Cytochrome b561 and DOMON domain-containing protein At5g48750 (255 aa).

The N-terminal stretch at 1-27 (MFLSSRTIFVGLCFLFVLAPCFTRATT) is a signal peptide. A DOMON domain is found at 54–169 (LDSFLHYSYV…TVVNHLWQDG (116 aa)). Residues 176–255 (RLGMHAMSGN…DPTWFYILIL (80 aa)) enclose the Cytochrome b561 domain. The chain crosses the membrane as a helical span at residues 216–236 (IHGLVNAVCWGIFIPIGVMAA).

Its subcellular location is the membrane. The protein is Cytochrome b561 and DOMON domain-containing protein At5g48750 of Arabidopsis thaliana (Mouse-ear cress).